A 295-amino-acid chain; its full sequence is Aquaporin NIP2-1 (295 aa).

2 consecutive transmembrane segments (helical) span residues 49 to 69 and 83 to 103; these read VVSE…AAGI and SVAG…ISGA. Residues 106–108 carry the NPA 1 motif; the sequence is NPA. A run of 3 helical transmembrane segments spans residues 124-146, 164-184, and 192-212; these read VPFY…KAVL, SLVI…AVAT, and LAGL…GAVS. An NPA 2 motif is present at residues 217–219; that stretch reads NPA. The helical transmembrane segment at 230–250 threads the bilayer; sequence LYTGLWIYFLGPVLGTLSGAW.

This sequence belongs to the MIP/aquaporin (TC 1.A.8) family. NIP (TC 1.A.8.12) subfamily.

It is found in the membrane. Functionally, aquaporins facilitate the transport of water and small neutral solutes across cell membranes. The polypeptide is Aquaporin NIP2-1 (NIP2-1) (Zea mays (Maize)).